A 438-amino-acid chain; its full sequence is Cysteine--tRNA ligase (438 aa).

Position 28 (Cys-28) interacts with Zn(2+). The 'HIGH' region motif lies at 30–40 (PTVYNHLHLGN). The Zn(2+) site is built by Cys-207, His-232, and Glu-236. Positions 264 to 268 (KMSKS) match the 'KMSKS' region motif. Lys-267 lines the ATP pocket.

The protein belongs to the class-I aminoacyl-tRNA synthetase family. Monomer. Zn(2+) is required as a cofactor.

It localises to the cytoplasm. The catalysed reaction is tRNA(Cys) + L-cysteine + ATP = L-cysteinyl-tRNA(Cys) + AMP + diphosphate. This is Cysteine--tRNA ligase from Aster yellows witches'-broom phytoplasma (strain AYWB).